A 334-amino-acid chain; its full sequence is Holliday junction branch migration complex subunit RuvB (334 aa).

Positions 1-182 (MDDRMVDQSM…FGVHLRLEYY (182 aa)) are large ATPase domain (RuvB-L). Residues L21, R22, G63, K66, T67, T68, 129-131 (EDF), R172, Y182, and R219 contribute to the ATP site. Residue T67 coordinates Mg(2+). Residues 183 to 253 (QELELKEIIV…TTRASLQLLQ (71 aa)) are small ATPAse domain (RuvB-S). The interval 256–334 (DEGLDYIDHK…HFSKKNGKKE (79 aa)) is head domain (RuvB-H). The DNA site is built by R292, R311, and R316.

This sequence belongs to the RuvB family. Homohexamer. Forms an RuvA(8)-RuvB(12)-Holliday junction (HJ) complex. HJ DNA is sandwiched between 2 RuvA tetramers; dsDNA enters through RuvA and exits via RuvB. An RuvB hexamer assembles on each DNA strand where it exits the tetramer. Each RuvB hexamer is contacted by two RuvA subunits (via domain III) on 2 adjacent RuvB subunits; this complex drives branch migration. In the full resolvosome a probable DNA-RuvA(4)-RuvB(12)-RuvC(2) complex forms which resolves the HJ.

The protein localises to the cytoplasm. The catalysed reaction is ATP + H2O = ADP + phosphate + H(+). Its function is as follows. The RuvA-RuvB-RuvC complex processes Holliday junction (HJ) DNA during genetic recombination and DNA repair, while the RuvA-RuvB complex plays an important role in the rescue of blocked DNA replication forks via replication fork reversal (RFR). RuvA specifically binds to HJ cruciform DNA, conferring on it an open structure. The RuvB hexamer acts as an ATP-dependent pump, pulling dsDNA into and through the RuvAB complex. RuvB forms 2 homohexamers on either side of HJ DNA bound by 1 or 2 RuvA tetramers; 4 subunits per hexamer contact DNA at a time. Coordinated motions by a converter formed by DNA-disengaged RuvB subunits stimulates ATP hydrolysis and nucleotide exchange. Immobilization of the converter enables RuvB to convert the ATP-contained energy into a lever motion, pulling 2 nucleotides of DNA out of the RuvA tetramer per ATP hydrolyzed, thus driving DNA branch migration. The RuvB motors rotate together with the DNA substrate, which together with the progressing nucleotide cycle form the mechanistic basis for DNA recombination by continuous HJ branch migration. Branch migration allows RuvC to scan DNA until it finds its consensus sequence, where it cleaves and resolves cruciform DNA. In Staphylococcus saprophyticus subsp. saprophyticus (strain ATCC 15305 / DSM 20229 / NCIMB 8711 / NCTC 7292 / S-41), this protein is Holliday junction branch migration complex subunit RuvB.